We begin with the raw amino-acid sequence, 196 residues long: HTH-type transcriptional regulator BetI (196 aa).

One can recognise an HTH tetR-type domain in the interval 8–68 (PVRREQLIRA…AAMRQILREL (61 aa)). Positions 31–50 (TVATIAKKAGLSSGIVAHYF) form a DNA-binding region, H-T-H motif.

It participates in amine and polyamine biosynthesis; betaine biosynthesis via choline pathway [regulation]. Its function is as follows. Repressor involved in the biosynthesis of the osmoprotectant glycine betaine. It represses transcription of the choline transporter BetT and the genes of BetAB involved in the synthesis of glycine betaine. This chain is HTH-type transcriptional regulator BetI, found in Stenotrophomonas maltophilia (strain R551-3).